The sequence spans 266 residues: Thymidylate synthase (266 aa).

DUMP is bound by residues Arg-21 and 127–128 (RR). The active-site Nucleophile is Cys-147. Residues 168–171 (RSAD), Asn-179, and 209–211 (HIY) contribute to the dUMP site. Asp-171 serves as a coordination point for (6R)-5,10-methylene-5,6,7,8-tetrahydrofolate. Residue Ala-265 coordinates (6R)-5,10-methylene-5,6,7,8-tetrahydrofolate.

Belongs to the thymidylate synthase family. Bacterial-type ThyA subfamily. As to quaternary structure, homodimer.

It is found in the cytoplasm. The enzyme catalyses dUMP + (6R)-5,10-methylene-5,6,7,8-tetrahydrofolate = 7,8-dihydrofolate + dTMP. The protein operates within pyrimidine metabolism; dTTP biosynthesis. Functionally, catalyzes the reductive methylation of 2'-deoxyuridine-5'-monophosphate (dUMP) to 2'-deoxythymidine-5'-monophosphate (dTMP) while utilizing 5,10-methylenetetrahydrofolate (mTHF) as the methyl donor and reductant in the reaction, yielding dihydrofolate (DHF) as a by-product. This enzymatic reaction provides an intracellular de novo source of dTMP, an essential precursor for DNA biosynthesis. The polypeptide is Thymidylate synthase (Brachyspira hyodysenteriae (strain ATCC 49526 / WA1)).